We begin with the raw amino-acid sequence, 497 residues long: MPMKFEFTFSKSHRPAGGSAVLLQVAGAKEPAGVAVVDPEGVLPKAAKIGKFSGKALSSLDIVAPHGSPADRIILLGLGDAAALTSHDWLKAGGAAAAKLRSADKATIFLDAPGVDVTGKAAADFALGMEMNAYAFDSYKTRKSDDESKSAQKVVKVTIVTGMVIAAKKAFATVQSIGEGVFLARDLVNEPANVLGPVEFAARAKELEKLGVEVETLTEREMKKLGMGALLGVAQGSSRPPRLVVMQWKGGKAKDKPLAFIGKGVVFDTGGISIKPASGMEEMKGDMGGAAAVTGLMHVLAARKASVNAVGIIGLVENMPDGSAQRPGDIVTSMSGQTIEVINTDAEGRLVLCDALWYCNDRFKPKAMIDLATLTGAIMVALSNHYAGLFSNDDRLAEQLLKAGTTTHERLWRMPLGKEYDKMIDSKFADMKNTGGRHGGSVTAAQFLKRFVKDTPWAHLDIAGTAMGSPTDEINQSWGSGFGVRLLDELVRANYES.

Mn(2+) is bound by residues K263 and D268. K275 is a catalytic residue. D286, D345, and E347 together coordinate Mn(2+). R349 is a catalytic residue.

It belongs to the peptidase M17 family. Mn(2+) is required as a cofactor.

Its subcellular location is the cytoplasm. It catalyses the reaction Release of an N-terminal amino acid, Xaa-|-Yaa-, in which Xaa is preferably Leu, but may be other amino acids including Pro although not Arg or Lys, and Yaa may be Pro. Amino acid amides and methyl esters are also readily hydrolyzed, but rates on arylamides are exceedingly low.. It carries out the reaction Release of an N-terminal amino acid, preferentially leucine, but not glutamic or aspartic acids.. Its function is as follows. Presumably involved in the processing and regular turnover of intracellular proteins. Catalyzes the removal of unsubstituted N-terminal amino acids from various peptides. This Sinorhizobium fredii (strain NBRC 101917 / NGR234) protein is Probable cytosol aminopeptidase.